Here is a 569-residue protein sequence, read N- to C-terminus: Endonuclease/exonuclease/phosphatase family domain-containing protein 1 (569 aa).

The segment at Met1–His20 is disordered. A lipid anchor (N-myristoyl glycine) is attached at Gly2. A compositionally biased stretch (basic and acidic residues) spans Ile11 to His20. Phosphoserine occurs at positions 16, 21, and 25. The region spanning Glu38–Tyr67 is the HhH domain. 4 positions are modified to phosphoserine: Ser106, Ser110, Ser160, and Ser173. Residues Ser200–Leu224 are disordered. Residues Pro202 to Leu211 are compositionally biased toward polar residues. Phosphothreonine is present on Thr265. A disordered region spans residues Glu548–Arg569.

This is Endonuclease/exonuclease/phosphatase family domain-containing protein 1 (Eepd1) from Rattus norvegicus (Rat).